Reading from the N-terminus, the 167-residue chain is Large ribosomal subunit protein bL9 (167 aa).

Belongs to the bacterial ribosomal protein bL9 family.

Functionally, binds to the 23S rRNA. This is Large ribosomal subunit protein bL9 from Nitratidesulfovibrio vulgaris (strain DSM 19637 / Miyazaki F) (Desulfovibrio vulgaris).